Here is a 368-residue protein sequence, read N- to C-terminus: Nicotinate-nucleotide--dimethylbenzimidazole phosphoribosyltransferase (368 aa).

Glutamate 314 (proton acceptor) is an active-site residue. The disordered stretch occupies residues 344–368 (DRADGADNSADSGASAGTVASDPTV). A compositionally biased stretch (low complexity) spans 349-360 (ADNSADSGASAG).

Belongs to the CobT family.

It carries out the reaction 5,6-dimethylbenzimidazole + nicotinate beta-D-ribonucleotide = alpha-ribazole 5'-phosphate + nicotinate + H(+). It functions in the pathway nucleoside biosynthesis; alpha-ribazole biosynthesis; alpha-ribazole from 5,6-dimethylbenzimidazole: step 1/2. Its function is as follows. Catalyzes the synthesis of alpha-ribazole-5'-phosphate from nicotinate mononucleotide (NAMN) and 5,6-dimethylbenzimidazole (DMB). This Corynebacterium efficiens (strain DSM 44549 / YS-314 / AJ 12310 / JCM 11189 / NBRC 100395) protein is Nicotinate-nucleotide--dimethylbenzimidazole phosphoribosyltransferase.